Reading from the N-terminus, the 365-residue chain is MPPLPVLNRPQIHTSVTEISHAIDRTIKEELFPVAYTTEEEQYFKTNPKPAYIDELIKDAKEFIDLQYSLKRNKIVLITSGGTTVPLENNTVRFIDNFSAGTRGASSAEQFLANGYSVIFLHREFSLTPYNRSFSHSINTLFLDYIDSEGKIKPEFAENVLKNKKLYDKYMEKEEKLLLLPFTTVNQYLWSLKSIAKLLNNSGCLFYLAAAVSDFFVPYSRLPQHKIQSGDNGKMGANNDTEGTTRTTPDGKLIVNLDPVPKFLRRLVESWATQAMIVSFKLETDESMLLYKCTQALDRYNHQLVIGNLLQTRNKQVIFVSPENRKGDWVRLDEKHHSIEEMIIPEVIARHDKWVAHSKTKLATK.

A disordered region spans residues 228–250 (QSGDNGKMGANNDTEGTTRTTPD). Residues 238-248 (NNDTEGTTRTT) are compositionally biased toward polar residues.

It belongs to the PPC synthetase family. As to quaternary structure, homodimer.

The protein resides in the cytoplasm. It localises to the nucleus. The enzyme catalyses (R)-4'-phosphopantothenate + L-cysteine + CTP = N-[(R)-4-phosphopantothenoyl]-L-cysteine + CMP + diphosphate + H(+). Its pathway is cofactor biosynthesis; coenzyme A biosynthesis; CoA from (R)-pantothenate: step 2/5. In terms of biological role, catalyzes the first step in the biosynthesis of coenzyme A from vitamin B5, where cysteine is conjugated to 4'-phosphopantothenate to form 4-phosphopantothenoylcysteine. This Saccharomyces cerevisiae (strain ATCC 204508 / S288c) (Baker's yeast) protein is Phosphopantothenate--cysteine ligase CAB2 (CAB2).